The sequence spans 133 residues: Ribosome-binding factor A (133 aa).

It belongs to the RbfA family. As to quaternary structure, monomer. Binds 30S ribosomal subunits, but not 50S ribosomal subunits or 70S ribosomes.

It is found in the cytoplasm. In terms of biological role, one of several proteins that assist in the late maturation steps of the functional core of the 30S ribosomal subunit. Associates with free 30S ribosomal subunits (but not with 30S subunits that are part of 70S ribosomes or polysomes). Required for efficient processing of 16S rRNA. May interact with the 5'-terminal helix region of 16S rRNA. The sequence is that of Ribosome-binding factor A from Salmonella typhimurium (strain LT2 / SGSC1412 / ATCC 700720).